A 239-amino-acid polypeptide reads, in one-letter code: Probable transcriptional regulatory protein BCAH187_A0615 (239 aa).

The protein belongs to the TACO1 family. YeeN subfamily.

It localises to the cytoplasm. This chain is Probable transcriptional regulatory protein BCAH187_A0615, found in Bacillus cereus (strain AH187).